We begin with the raw amino-acid sequence, 34 residues long: Aspartate aminotransferase 2 (34 aa).

Belongs to the class-I pyridoxal-phosphate-dependent aminotransferase family. In terms of assembly, homodimer. Pyridoxal 5'-phosphate serves as cofactor.

It carries out the reaction L-aspartate + 2-oxoglutarate = oxaloacetate + L-glutamate. Functionally, important for the metabolism of amino acids and Krebs-cycle related organic acids. In plants, it is involved in nitrogen metabolism and in aspects of carbon and energy metabolism. This chain is Aspartate aminotransferase 2, found in Pseudotsuga menziesii (Douglas-fir).